Here is a 501-residue protein sequence, read N- to C-terminus: Armadillo repeat-containing protein 6 (501 aa).

The residue at position 64 (Ser-64) is a Phosphoserine. 4 ARM repeats span residues 220 to 264 (GVLP…HAHN), 274 to 318 (KGLK…DLGG), 319 to 369 (LSIL…RAGG), and 370 to 412 (TESI…VEGG). His-263 bears the Pros-methylhistidine mark.

This sequence belongs to the ARMC6 family. Methylated at His-263 by METTL9.

The protein is Armadillo repeat-containing protein 6 (ARMC6) of Homo sapiens (Human).